A 243-amino-acid chain; its full sequence is F-box protein pof15 (243 aa).

An F-box domain is found at 28 to 73; it reads QTSSTLLPVEVIDSVMQYLPAHDVIQSSFASYPLTLIANKIIRARL.

Its pathway is protein modification; protein ubiquitination. Functionally, probable substrate recognition component of a SCF (SKP1-CUL1-F-box protein) E3 ubiquitin-protein ligase complex that mediates the ubiquitination and subsequent proteasomal degradation of target proteins. The chain is F-box protein pof15 (pof15) from Schizosaccharomyces pombe (strain 972 / ATCC 24843) (Fission yeast).